Consider the following 146-residue polypeptide: Hemoglobin subunit delta (146 aa).

The Globin domain occupies 2-146 (HLTGDEKSAV…VATALAHKYH (145 aa)). Residue Ser-50 is modified to Phosphoserine. Residues His-63 and His-92 each contribute to the heme b site.

Belongs to the globin family. Heterotetramer of two delta chains and two alpha chains. In terms of tissue distribution, red blood cells.

The polypeptide is Hemoglobin subunit delta (HBD) (Aotus trivirgatus (Three-striped night monkey)).